Here is a 217-residue protein sequence, read N- to C-terminus: Adenylate kinase (217 aa).

10–15 (GAGKGT) lines the ATP pocket. An NMP region spans residues 30–59 (STGDIFRKNISDKTPLGIEAKEYLDKGQLV). AMP contacts are provided by residues threonine 31, arginine 36, 57-59 (QLV), 85-88 (GFPR), and glutamine 92. The tract at residues 126 to 163 (GRRICPSCGASYHVKFNPPKLKDKCDICNNDIIQRKDD) is LID. Residue arginine 127 participates in ATP binding. Residues cysteine 130 and cysteine 133 each contribute to the Zn(2+) site. 136–137 (SY) serves as a coordination point for ATP. Cysteine 150 and cysteine 153 together coordinate Zn(2+). Positions 160 and 171 each coordinate AMP. Residue glycine 199 coordinates ATP.

It belongs to the adenylate kinase family. As to quaternary structure, monomer.

Its subcellular location is the cytoplasm. The enzyme catalyses AMP + ATP = 2 ADP. It functions in the pathway purine metabolism; AMP biosynthesis via salvage pathway; AMP from ADP: step 1/1. Catalyzes the reversible transfer of the terminal phosphate group between ATP and AMP. Plays an important role in cellular energy homeostasis and in adenine nucleotide metabolism. In Clostridium kluyveri (strain NBRC 12016), this protein is Adenylate kinase.